The primary structure comprises 440 residues: MNSHSPSLRCHAISLGCPKNRVDTERLLGSLGIPLTFIDYPNNADFVFINTCSFIHTAVQESVNTILQLVADVEELSEKPFIIVAGCFVGRYGEKILKKDIPEVDLWLDNKEIESWNEQILLALNIKSTFLVTDRIITTGKSYAWLKISDGCQHSCSFCTIPSIRGSLHSYSIDELVKESRHILDQGVKELVLVAQDVTAWGRDLPNNYGLKTLLDHLLVLDGLKRLRLMYLYPTGLTKDFLLYLKSVGEPFVPYFDVPIQHAHPDILSCMGRPFAKNPRKVIDNIRSVFPEAVLRTSVITGFPGETEGHHVYLSKFIEEIKFQHLGIFSYVAEAGTPAAVMPNQVGEKVKEQRKAELMEIQLKISEKWLKNFVGKRLSLIVDNVHPEWPELYTGRAWFQAPEVDGMVYISGPNIKPGELIEADIMESHSYDLVALADSY.

Positions 8–125 (LRCHAISLGC…WNEQILLALN (118 aa)) constitute an MTTase N-terminal domain. The [4Fe-4S] cluster site is built by cysteine 17, cysteine 52, cysteine 87, cysteine 152, cysteine 156, and cysteine 159. The 231-residue stretch at 138-368 (TTGKSYAWLK…MEIQLKISEK (231 aa)) folds into the Radical SAM core domain. The TRAM domain maps to 371-439 (KNFVGKRLSL…SYDLVALADS (69 aa)).

Belongs to the methylthiotransferase family. RimO subfamily. [4Fe-4S] cluster is required as a cofactor.

Its subcellular location is the cytoplasm. The enzyme catalyses L-aspartate(89)-[ribosomal protein uS12]-hydrogen + (sulfur carrier)-SH + AH2 + 2 S-adenosyl-L-methionine = 3-methylsulfanyl-L-aspartate(89)-[ribosomal protein uS12]-hydrogen + (sulfur carrier)-H + 5'-deoxyadenosine + L-methionine + A + S-adenosyl-L-homocysteine + 2 H(+). In terms of biological role, catalyzes the methylthiolation of an aspartic acid residue of ribosomal protein uS12. This Lawsonia intracellularis (strain PHE/MN1-00) protein is Ribosomal protein uS12 methylthiotransferase RimO.